The primary structure comprises 451 residues: tRNA-2-methylthio-N(6)-dimethylallyladenosine synthase (451 aa).

In terms of domain architecture, MTTase N-terminal spans Gln-2–Ala-119. Residues Cys-11, Cys-48, Cys-82, Cys-157, Cys-161, and Cys-164 each contribute to the [4Fe-4S] cluster site. A Radical SAM core domain is found at Gly-143 to Ala-377. A TRAM domain is found at Gln-378–Leu-441.

Belongs to the methylthiotransferase family. MiaB subfamily. As to quaternary structure, monomer. [4Fe-4S] cluster is required as a cofactor.

The protein localises to the cytoplasm. It catalyses the reaction N(6)-dimethylallyladenosine(37) in tRNA + (sulfur carrier)-SH + AH2 + 2 S-adenosyl-L-methionine = 2-methylsulfanyl-N(6)-dimethylallyladenosine(37) in tRNA + (sulfur carrier)-H + 5'-deoxyadenosine + L-methionine + A + S-adenosyl-L-homocysteine + 2 H(+). In terms of biological role, catalyzes the methylthiolation of N6-(dimethylallyl)adenosine (i(6)A), leading to the formation of 2-methylthio-N6-(dimethylallyl)adenosine (ms(2)i(6)A) at position 37 in tRNAs that read codons beginning with uridine. The polypeptide is tRNA-2-methylthio-N(6)-dimethylallyladenosine synthase (Acidithiobacillus ferrooxidans (strain ATCC 23270 / DSM 14882 / CIP 104768 / NCIMB 8455) (Ferrobacillus ferrooxidans (strain ATCC 23270))).